The primary structure comprises 247 residues: MFLAKAILEGADRGLGGALGGLLGGGGQARAGGGNIGGILGGIVNFISEAAAAQYTPEPPPQQQHFTVVEASESEEVRRFRQQFTQLAGPDMEVGATDLMNILNKVLSKHKELKTEGFSLDTCRSIVSVMDSDTTGKLGFEEFKYLWNNIKKWQCVFKQYDSDHSGSLGSSQLHGAMQAAGFQLNEQLYLMIVRRYADEDGGMDFNNFISCLVRLDAMFRAFKALDRDRDGLIQVSIREWLQLTMYS.

Ca(2+) is bound by residues alanine 88, aspartate 91, glutamate 93, aspartate 131, aspartate 133, threonine 135, lysine 137, glutamate 142, aspartate 161, aspartate 163, serine 165, and aspartate 204. 4 EF-hand domains span residues 118–151 (FSLD…NNIK), 148–183 (NNIK…AGFQ), 184–212 (LNEQ…ISCL), and 213–247 (VRLD…TMYS).

In terms of assembly, heterodimer of a large (catalytic) and a small (regulatory) subunit.

Its subcellular location is the cytoplasm. The protein localises to the cell membrane. Its function is as follows. Calcium-regulated non-lysosomal thiol-protease which catalyzes limited proteolysis of substrates involved in cytoskeletal remodeling and signal transduction. This small subunit may act as a tissue-specific chaperone of the large subunit, possibly by helping it fold into its correct conformation for activity. In Mus musculus (Mouse), this protein is Calpain small subunit 2 (Capns2).